We begin with the raw amino-acid sequence, 629 residues long: Embryonic polyadenylate-binding protein A (629 aa).

4 RRM domains span residues 11 to 89 (ASLY…WSQR), 99 to 175 (GNVF…HFKS), 191 to 268 (TNVY…RAQK), and 294 to 370 (VNLY…LAQR). Residues 539-616 (QEPLTASLLA…AVAVLQAHQA (78 aa)) form the PABC domain.

This sequence belongs to the polyadenylate-binding protein type-1 family. As to quaternary structure, interacts with dazl in an RNA-independent manner. The C-terminus can self-associate and also interact with the C-terminus of pabpc1, independently of RNA. RRM 1 and RRM 2 interact with both eif4g1 and paip1, and the C-terminus also interacts with paip1. Prior to oocyte maturation, found in a complex with dazl and pum2 proteins and spdy1 mRNA; pum2 dissociates from the complex during maturation. Interacts with the translation termination factor sup35/erf3. As to expression, expressed in adult testis, but at a reduced level compared to oocytes.

It localises to the cytoplasm. Its function is as follows. Binds and protects the poly(A) tail of mRNA with or without an AU-rich element (ARE) and prevents mRNA deadenylation. Stimulates the translation of mRNAs to which it is bound during early development. The chain is Embryonic polyadenylate-binding protein A (epabp-a) from Xenopus laevis (African clawed frog).